A 676-amino-acid polypeptide reads, in one-letter code: Vitamin K-dependent protein S (676 aa).

The N-terminal stretch at M1–A24 is a signal peptide. Positions N25–R41 are excised as a propeptide. In terms of domain architecture, Gla spans A42–V87. E47, E48, E55, E57, E60, E61, E66, E67, E70, E73, and E77 each carry 4-carboxyglutamate. An intrachain disulfide couples C58 to C63. The segment at C88–A116 is thrombin-sensitive. Residues I117–E155 enclose the EGF-like 1 domain. 13 cysteine pairs are disulfide-bonded: C121/C134, C126/C143, C145/C154, C161/C175, C171/C184, C186/C199, C205/C217, C212/C226, C228/C241, C247/C256, C252/C265, C267/C282, and C449/C475. D136 carries the (3R)-3-hydroxyaspartate modification. One can recognise an EGF-like 2; calcium-binding domain in the interval D157–K200. The 42-residue stretch at D201 to E242 folds into the EGF-like 3; calcium-binding domain. The 41-residue stretch at D243–E283 folds into the EGF-like 4; calcium-binding domain. 2 consecutive Laminin G-like domains span residues L299–C475 and Y484–C666. N-linked (GlcNAc...) asparagine glycosylation is found at N499, N509, and N530. C639 and C666 are disulfide-bonded.

Post-translationally, the iron and 2-oxoglutarate dependent 3-hydroxylation of aspartate and asparagine is (R) stereospecific within EGF domains. As to expression, plasma.

The protein localises to the secreted. Functionally, anticoagulant plasma protein; it is a cofactor to activated protein C in the degradation of coagulation factors Va and VIIIa. It helps to prevent coagulation and stimulating fibrinolysis. This Homo sapiens (Human) protein is Vitamin K-dependent protein S (PROS1).